The primary structure comprises 453 residues: Dibenzothiophene-sulfone monooxygenase (453 aa).

Residues Asp-59, Thr-106, His-156, Tyr-160, and Ser-231 each coordinate FMN.

The protein belongs to the NtaA/SnaA/DszA monooxygenase family. In terms of assembly, homodimer.

The protein resides in the cytoplasm. It catalyses the reaction dibenzothiophene 5,5-dioxide + FMNH2 + NADH + O2 = 2'-hydroxybiphenyl-2-sulfinate + FMN + NAD(+) + H2O + H(+). The protein operates within sulfur metabolism; dibenzothiophene degradation. Its function is as follows. Catalyzes the second step of the '4S' desulfurization pathway that removes covalently bound sulfur from dibenzothiophene (DBT) without breaking carbon-carbon bonds. Metabolizes DBT-sulfone (DBTO2 or DBT 5,5-dioxide) to 2-(2'-hydroxyphenyl)benzene sulphinate (HBPS). This chain is Dibenzothiophene-sulfone monooxygenase, found in Rhodococcus erythropolis (Arthrobacter picolinophilus).